The chain runs to 228 residues: Phosphatidylserine decarboxylase proenzyme (228 aa).

Residue Ser-197 is the Schiff-base intermediate with substrate; via pyruvic acid of the active site. The residue at position 197 (Ser-197) is a Pyruvic acid (Ser); by autocatalysis.

This sequence belongs to the phosphatidylserine decarboxylase family. PSD-A subfamily. As to quaternary structure, heterodimer of a large membrane-associated beta subunit and a small pyruvoyl-containing alpha subunit. It depends on pyruvate as a cofactor. In terms of processing, is synthesized initially as an inactive proenzyme. Formation of the active enzyme involves a self-maturation process in which the active site pyruvoyl group is generated from an internal serine residue via an autocatalytic post-translational modification. Two non-identical subunits are generated from the proenzyme in this reaction, and the pyruvate is formed at the N-terminus of the alpha chain, which is derived from the carboxyl end of the proenzyme. The post-translation cleavage follows an unusual pathway, termed non-hydrolytic serinolysis, in which the side chain hydroxyl group of the serine supplies its oxygen atom to form the C-terminus of the beta chain, while the remainder of the serine residue undergoes an oxidative deamination to produce ammonia and the pyruvoyl prosthetic group on the alpha chain.

It localises to the cell membrane. The enzyme catalyses a 1,2-diacyl-sn-glycero-3-phospho-L-serine + H(+) = a 1,2-diacyl-sn-glycero-3-phosphoethanolamine + CO2. The protein operates within phospholipid metabolism; phosphatidylethanolamine biosynthesis; phosphatidylethanolamine from CDP-diacylglycerol: step 2/2. Its function is as follows. Catalyzes the formation of phosphatidylethanolamine (PtdEtn) from phosphatidylserine (PtdSer). The chain is Phosphatidylserine decarboxylase proenzyme from Phocaeicola vulgatus (strain ATCC 8482 / DSM 1447 / JCM 5826 / CCUG 4940 / NBRC 14291 / NCTC 11154) (Bacteroides vulgatus).